The following is a 401-amino-acid chain: Riboflavin biosynthesis protein RibBA (401 aa).

A DHBP synthase region spans residues 1–203 (MTDFQFSKVE…IQQLQEYRRK (203 aa)). D-ribulose 5-phosphate is bound by residues 30-31 (RE), aspartate 35, 142-146 (RNGHT), and glutamate 166. Mg(2+) is bound at residue glutamate 31. Histidine 145 contributes to the Mg(2+) binding site. Positions 204–401 (HDSLVKQISV…QIKMGHMFNF (198 aa)) are GTP cyclohydrolase II. 254–258 (RIHSE) provides a ligand contact to GTP. 3 residues coordinate Zn(2+): cysteine 259, cysteine 270, and cysteine 272. Residues glutamine 275, 297–299 (EGR), and threonine 319 contribute to the GTP site. The active-site Proton acceptor; for GTP cyclohydrolase activity is aspartate 331. The Nucleophile; for GTP cyclohydrolase activity role is filled by arginine 333. Threonine 354 and lysine 359 together coordinate GTP.

It in the N-terminal section; belongs to the DHBP synthase family. In the C-terminal section; belongs to the GTP cyclohydrolase II family. The cofactor is Mg(2+). Mn(2+) is required as a cofactor. Zn(2+) serves as cofactor.

It catalyses the reaction D-ribulose 5-phosphate = (2S)-2-hydroxy-3-oxobutyl phosphate + formate + H(+). It carries out the reaction GTP + 4 H2O = 2,5-diamino-6-hydroxy-4-(5-phosphoribosylamino)-pyrimidine + formate + 2 phosphate + 3 H(+). It functions in the pathway cofactor biosynthesis; riboflavin biosynthesis; 2-hydroxy-3-oxobutyl phosphate from D-ribulose 5-phosphate: step 1/1. Its pathway is cofactor biosynthesis; riboflavin biosynthesis; 5-amino-6-(D-ribitylamino)uracil from GTP: step 1/4. Functionally, catalyzes the conversion of D-ribulose 5-phosphate to formate and 3,4-dihydroxy-2-butanone 4-phosphate. In terms of biological role, catalyzes the conversion of GTP to 2,5-diamino-6-ribosylamino-4(3H)-pyrimidinone 5'-phosphate (DARP), formate and pyrophosphate. This Actinobacillus pleuropneumoniae serotype 5b (strain L20) protein is Riboflavin biosynthesis protein RibBA.